The primary structure comprises 338 residues: UDP-3-O-acylglucosamine N-acyltransferase (338 aa).

The Proton acceptor role is filled by histidine 239.

The protein belongs to the transferase hexapeptide repeat family. LpxD subfamily. Homotrimer.

The catalysed reaction is a UDP-3-O-[(3R)-3-hydroxyacyl]-alpha-D-glucosamine + a (3R)-hydroxyacyl-[ACP] = a UDP-2-N,3-O-bis[(3R)-3-hydroxyacyl]-alpha-D-glucosamine + holo-[ACP] + H(+). It participates in bacterial outer membrane biogenesis; LPS lipid A biosynthesis. Functionally, catalyzes the N-acylation of UDP-3-O-acylglucosamine using 3-hydroxyacyl-ACP as the acyl donor. Is involved in the biosynthesis of lipid A, a phosphorylated glycolipid that anchors the lipopolysaccharide to the outer membrane of the cell. This is UDP-3-O-acylglucosamine N-acyltransferase from Xylella fastidiosa (strain 9a5c).